The chain runs to 396 residues: Elongation factor Tu 1 (396 aa).

The region spanning 10–206 (KPHVNVGTIG…ALDTYIPTPK (197 aa)) is the tr-type G domain. Residues 19-26 (GHVDHGKT) form a G1 region. A GTP-binding site is contributed by 19–26 (GHVDHGKT). A Mg(2+)-binding site is contributed by Thr26. A G2 region spans residues 60 to 64 (GITIS). Residues 81–84 (DCPG) are G3. GTP-binding positions include 81 to 85 (DCPGH) and 136 to 139 (NKAD). Residues 136–139 (NKAD) are G4. The G5 stretch occupies residues 174–176 (SAL).

This sequence belongs to the TRAFAC class translation factor GTPase superfamily. Classic translation factor GTPase family. EF-Tu/EF-1A subfamily. As to quaternary structure, monomer.

It localises to the cytoplasm. The catalysed reaction is GTP + H2O = GDP + phosphate + H(+). Its function is as follows. GTP hydrolase that promotes the GTP-dependent binding of aminoacyl-tRNA to the A-site of ribosomes during protein biosynthesis. In Ruthia magnifica subsp. Calyptogena magnifica, this protein is Elongation factor Tu 1.